The chain runs to 233 residues: LexA repressor (233 aa).

Positions 26-46 (FDEMKDALDLRSKSGIHRLIT) form a DNA-binding region, H-T-H motif. Catalysis depends on for autocatalytic cleavage activity residues S154 and K192.

This sequence belongs to the peptidase S24 family. In terms of assembly, homodimer.

The enzyme catalyses Hydrolysis of Ala-|-Gly bond in repressor LexA.. In terms of biological role, represses a number of genes involved in the response to DNA damage (SOS response), including recA and lexA. In the presence of single-stranded DNA, RecA interacts with LexA causing an autocatalytic cleavage which disrupts the DNA-binding part of LexA, leading to derepression of the SOS regulon and eventually DNA repair. The protein is LexA repressor of Nitrobacter hamburgensis (strain DSM 10229 / NCIMB 13809 / X14).